A 988-amino-acid polypeptide reads, in one-letter code: Voltage-gated delayed rectifier potassium channel KCNH5 (988 aa).

The Cytoplasmic segment spans residues M1–W217. Positions T14–D86 constitute a PAS domain. The region spanning N91–T143 is the PAC domain. A helical membrane pass occupies residues D218–F238. Over K239 to N243 the chain is Extracellular. The helical transmembrane segment at N244–L264 threads the bilayer. At N265–T291 the chain is on the cytoplasmic side. The chain crosses the membrane as a helical span at residues W292–V312. Over D313–L319 the chain is Extracellular. Residues F320 to H340 traverse the membrane as a helical; Voltage-sensor segment. Residues Y341–A346 are Cytoplasmic-facing. Residues A347–W367 traverse the membrane as a helical segment. At Y368 to Y419 the chain is on the extracellular side. N-linked (GlcNAc...) asparagine glycosylation is present at N403. An intramembrane region (pore-forming) is located at residues V420–P440. The short motif at T432 to N437 is the Selectivity filter element. The Extracellular segment spans residues T441 to K446. The chain crosses the membrane as a helical span at residues M447–V467. Residues T468 to F988 lie on the Cytoplasmic side of the membrane. A550 to T667 provides a ligand contact to a nucleoside 3',5'-cyclic phosphate. The tract at residues H704–Q715 is calmodulin-binding. The segment at E718–Q742 is disordered. Positions N721–Q742 are enriched in polar residues. Residue K785 forms a Glycyl lysine isopeptide (Lys-Gly) (interchain with G-Cter in ubiquitin) linkage. Disordered stretches follow at residues L839 to P897 and S946 to I965. Over residues S871–L885 the composition is skewed to basic and acidic residues. S883 carries the phosphoserine modification. The segment at T909–P948 is CAD (involved in subunit assembly).

This sequence belongs to the potassium channel family. H (Eag) (TC 1.A.1.20) subfamily. Kv10.2/KCNH5 sub-subfamily. Homotetramer. The potassium channel is probably composed of a homo- or heterotetrameric complex of pore-forming alpha subunits that can associate with modulating beta subunits. Heteromultimer with KCNH1/EAG. As to expression, detected in adult testis and in embryonic and adult brain, but not in other tissues. Highly expressed in specific brain areas, such as neocortex, olfactory bulb, primary olfactory cortex and brain stem. In cortex, expression is concentrated in a narrow band toward the middle lamella (layer IV). Moderately expressed in spinal cord, dorsal thalamic nuclei, medial hypothalamus, colliculus, lateral lemniscus, pontine nuclei and Islands of Calleja.

The protein localises to the membrane. It catalyses the reaction K(+)(in) = K(+)(out). With respect to regulation, inhibited by low nanomolar concentrations of cytosolic calcium. Its function is as follows. Pore-forming (alpha) subunit of a voltage-gated delayed rectifier potassium channel that mediates outward-rectifying potassium currents which, on depolarization, reaches a steady-state level and do not inactivate. The kinetic is characterized by a slow activation time course and a small voltage dependence of the activation time constants, therefore, starts to open at more negative voltages. The activation kinetics depend on the prepulse potential and external divalent cation concentration. The time course of activation is biphasic with a fast and a slowly activating current component. With negative prepulses, the current activation is delayed and slowed down several fold, whereas more positive prepulses speed up activation, therefore the activation rate depends on holding potential. This is Voltage-gated delayed rectifier potassium channel KCNH5 from Rattus norvegicus (Rat).